The sequence spans 214 residues: MITRIRGEMLEITPDYCVVMAGGLGYKIYIPDNCQEEIPDPGQEIDLHTYLSVREDAMTLYGFTSGEQLAVFELIMNVSGIGPKIALALVGTIPPTEFYLSVLNDQVNQLTKVPGIGKKSAQRIILELKEKVKDITSKDAYQDISASEKLDNTGEKLGISTRHKHLDELKAALSSLGYTNREIEKTVDAIQGQITEGQDMEELLRLALQKLNTK.

The domain I stretch occupies residues 1 to 64 (MITRIRGEML…EDAMTLYGFT (64 aa)). The interval 65–143 (SGEQLAVFEL…DITSKDAYQD (79 aa)) is domain II. The tract at residues 144-160 (ISASEKLDNTGEKLGIS) is flexible linker. The segment at 161–214 (TRHKHLDELKAALSSLGYTNREIEKTVDAIQGQITEGQDMEELLRLALQKLNTK) is domain III.

The protein belongs to the RuvA family. As to quaternary structure, homotetramer. Forms an RuvA(8)-RuvB(12)-Holliday junction (HJ) complex. HJ DNA is sandwiched between 2 RuvA tetramers; dsDNA enters through RuvA and exits via RuvB. An RuvB hexamer assembles on each DNA strand where it exits the tetramer. Each RuvB hexamer is contacted by two RuvA subunits (via domain III) on 2 adjacent RuvB subunits; this complex drives branch migration. In the full resolvosome a probable DNA-RuvA(4)-RuvB(12)-RuvC(2) complex forms which resolves the HJ.

It localises to the cytoplasm. In terms of biological role, the RuvA-RuvB-RuvC complex processes Holliday junction (HJ) DNA during genetic recombination and DNA repair, while the RuvA-RuvB complex plays an important role in the rescue of blocked DNA replication forks via replication fork reversal (RFR). RuvA specifically binds to HJ cruciform DNA, conferring on it an open structure. The RuvB hexamer acts as an ATP-dependent pump, pulling dsDNA into and through the RuvAB complex. HJ branch migration allows RuvC to scan DNA until it finds its consensus sequence, where it cleaves and resolves the cruciform DNA. This is Holliday junction branch migration complex subunit RuvA from Natranaerobius thermophilus (strain ATCC BAA-1301 / DSM 18059 / JW/NM-WN-LF).